A 924-amino-acid chain; its full sequence is Phosphatidate phosphatase LPIN1 (924 aa).

Positions 1–108 (MNYVGQLAGQ…IPMYLATSPI (108 aa)) are N-LIP. 2 positions are modified to phosphoserine: Ser106 and Ser150. Disordered stretches follow at residues 133-248 (PTTA…DCQR) and 269-297 (FHASESPSGSRPSTPKSDSELVSKSADRL). Over residues 152-161 (GKKRRKRRRK) the composition is skewed to basic residues. The Nuclear localization signal motif lies at 153 to 158 (KKRRKR). Residues 162-172 (AQLDNLKRDDN) show a composition bias toward basic and acidic residues. Positions 176-193 (SEDEDMFPIEMSSDEDTA) are enriched in acidic residues. Composition is skewed to polar residues over residues 218 to 229 (PSISTHPQSASY) and 273 to 284 (ESPSGSRPSTPK). A phosphoserine mark is found at Ser285, Ser287, and Ser293. A compositionally biased stretch (basic and acidic residues) spans 285–297 (SDSELVSKSADRL). Phosphothreonine is present on Thr298. Disordered regions lie at residues 314–426 (QAAK…SRHL) and 446–490 (LYFP…STSD). Ser328 is subject to Phosphoserine. The span at 343-358 (AIHSESSDTFSDQSPT) shows a compositional bias: polar residues. Ser392 bears the Phosphoserine mark. Polar residues predominate over residues 404–413 (NTAQSSSKTD). Position 459 is an N6-acetyllysine (Lys459). Over residues 461 to 476 (ASDNGARSANQSPQSV) the composition is skewed to polar residues. Phosphoserine occurs at positions 468, 472, and 483. Residues Lys599 and Lys629 each participate in a glycyl lysine isopeptide (Lys-Gly) (interchain with G-Cter in SUMO) cross-link. Residues 627–649 (RIKHESSSSDEEHAAAKPSGSSH) are disordered. A compositionally biased stretch (basic and acidic residues) spans 628–641 (IKHESSSSDEEHAA). Lys629 carries the post-translational modification N6-acetyllysine. A phosphoserine mark is found at Ser634 and Ser635. The interval 658–864 (YKKTLRLTSE…VNPKGELVQE (207 aa)) is C-LIP. Positions 712-716 (DIDGT) match the DXDXT motif motif. The LXXIL motif motif lies at 723-727 (LGHIL). Phosphoserine is present on residues Ser921 and Ser923.

It belongs to the lipin family. As to quaternary structure, interacts (via LXXIL motif) with PPARA. Interacts with PPARGC1A. Interaction with PPARA and PPARGC1A leads to the formation of a complex that modulates gene transcription. Interacts with MEF2C. Mg(2+) is required as a cofactor. Phosphorylated at multiple sites in response to insulin. Phosphorylation is controlled by the mTOR signaling pathway. Phosphorylation is decreased by epinephrine. Phosphorylation may not directly affect the catalytic activity but may regulate the localization. Dephosphorylated by the CTDNEP1-CNEP1R1 complex. Post-translationally, phosphorylated at multiple sites by mTOR in response to insulin, leading to its inactivation. Phosphorylation does not affect the catalytic activity but regulates the localization. Phosphorylation is decreased by epinephrine. Dephosphorylated by the CTDNEP1-CNEP1R1 complex. Dephosphorylation following mTOR inhibition promotes its activity. In terms of processing, sumoylation is important in brain and is marginal in other tissues. Sumoylation facilitates nuclear localization of isoform 2 in neuronals cells and its transcriptional coactivator activity. Acetylation at Lys-459 and Lys-629 by KAT5 in response to fatty acids promotes translocation to the endoplasmic reticulum and synthesis of diacylglycerol. As to expression, specifically expressed in skeletal muscle. Also expressed prominently in adipose tissue, and testis. Lower expression also detected in kidney, lung, brain and liver. Predominant isoform in the liver. In terms of tissue distribution, predominant isoform in the brain.

The protein localises to the mitochondrion outer membrane. The protein resides in the cytoplasm. It is found in the nucleus membrane. It localises to the nucleus. Its subcellular location is the endoplasmic reticulum membrane. The enzyme catalyses a 1,2-diacyl-sn-glycero-3-phosphate + H2O = a 1,2-diacyl-sn-glycerol + phosphate. The catalysed reaction is 1-octadecanoyl-2-(4Z,7Z,10Z,13Z,16Z,19Z-docosahexaenoyl)-sn-glycero-3-phosphate + H2O = 1-octadecanoyl-2-(4Z,7Z,10Z,13Z,16Z,19Z-docosahexaenoyl)-sn-glycerol + phosphate. It catalyses the reaction 1-octadecanoyl-2-(5Z,8Z,11Z,14Z-eicosatetraenoyl)-sn-glycero-3-phosphate + H2O = 1-octadecanoyl-2-(5Z,8Z,11Z,14Z-eicosatetraenoyl)-sn-glycerol + phosphate. It carries out the reaction 1-octadecanoyl-2-(9Z,12Z-octadecadienoyl)-sn-glycero-3-phosphate + H2O = 1-octadecanoyl-2-(9Z,12Z)-octadecadienoyl-sn-glycerol + phosphate. The enzyme catalyses 1-octadecanoyl-2-(9Z-octadecenoyl)-sn-glycero-3-phosphate + H2O = 1-octadecanoyl-2-(9Z-octadecenoyl)-sn-glycerol + phosphate. The catalysed reaction is 1-hexadecanoyl-2-(4Z,7Z,10Z,13Z,16Z,19Z-docosahexaenoyl)-sn-glycero-3-phosphate + H2O = 1-hexadecanoyl-2-(4Z,7Z,10Z,13Z,16Z,19Z-docosahexaenoyl)-sn-glycerol + phosphate. It catalyses the reaction 1,2-dioctadecanoyl-sn-glycero-3-phosphate + H2O = 1,2-dioctadecanoyl-sn-glycerol + phosphate. It carries out the reaction 1-hexadecanoyl-2-(5Z,8Z,11Z,14Z-eicosatetraenoyl)-sn-glycero-3-phosphate + H2O = 1-hexadecanoyl-2-(5Z,8Z,11Z,14Z-eicosatetraenoyl)-sn-glycerol + phosphate. The enzyme catalyses 1-hexadecanoyl-2-(9Z,12Z-octadecadienoyl)-sn-glycero-3-phosphate + H2O = 1-hexadecanoyl-2-(9Z,12Z-octadecadienoyl)-sn-glycerol + phosphate. The catalysed reaction is 1-hexadecanoyl-2-(9Z-octadecenoyl)-sn-glycero-3-phosphate + H2O = 1-hexadecanoyl-2-(9Z-octadecenoyl)-sn-glycerol + phosphate. It catalyses the reaction 1,2-di-(4Z,7Z,10Z,13Z,16Z,19Z-docosahexaenoyl)-sn-glycero-3-phosphate + H2O = 1,2-di-(4Z,7Z,10Z,13Z,16Z,19Z-docosahexaenoyl)-sn-glycerol + phosphate. It carries out the reaction 1,2-di-(5Z,8Z,11Z,14Z)-eicosatetraenoyl-sn-glycero-3-phosphate + H2O = 1,2-di-(5Z,8Z,11Z,14Z)-eicosatetraenoyl-sn-glycerol + phosphate. The enzyme catalyses 1,2-di-(9Z,12Z-octadecadienoyl)-sn-glycero-3-phosphate + H2O = 1,2-di-(9Z,12Z-octadecadienoyl)-sn-glycerol + phosphate. The catalysed reaction is 1,2-di-(9Z-octadecenoyl)-sn-glycero-3-phosphate + H2O = 1,2-di-(9Z-octadecenoyl)-sn-glycerol + phosphate. It catalyses the reaction 1,2-dihexadecanoyl-sn-glycero-3-phosphate + H2O = 1,2-dihexadecanoyl-sn-glycerol + phosphate. Inhibited by N-ethylmaleimide treatment. In terms of biological role, acts as a magnesium-dependent phosphatidate phosphatase enzyme which catalyzes the conversion of phosphatidic acid to diacylglycerol during triglyceride, phosphatidylcholine and phosphatidylethanolamine biosynthesis and therefore controls the metabolism of fatty acids at different levels. Is involved in adipocyte differentiation. Also acts as nuclear transcriptional coactivator for PPARGC1A/PPARA regulatory pathway to modulate lipid metabolism gene expression. Recruited at the mitochondrion outer membrane and is involved in mitochondrial fission by converting phosphatidic acid to diacylglycerol. This chain is Phosphatidate phosphatase LPIN1 (Lpin1), found in Mus musculus (Mouse).